The chain runs to 1161 residues: Perforin-like protein 1 (1161 aa).

Residues 67–86 (LWITFVCLLTLHMFGLSSAV) form a helical membrane-spanning segment. Residues 154–329 (PEALNEVPTK…LGDSSALDLF (176 aa)) form a disordered region. 2 stretches are compositionally biased toward basic and acidic residues: residues 162 to 177 (TKVE…DKTE) and 184 to 194 (ADHKSLLEGRS). Positions 201-211 (PDDDFDFLFED) are enriched in acidic residues. Residues 222–234 (NKGTSSDETSPGD) show a composition bias toward polar residues. Over residues 238-249 (GEGSSASDSLLS) the composition is skewed to low complexity. Asn-257 carries an N-linked (GlcNAc...) asparagine glycan. The segment covering 264-283 (NQKRITHPKSKAQHQKKVTK) has biased composition (basic residues). The segment covering 309 to 322 (NTQADDSQRQSLGD) has biased composition (polar residues). Residue Asn-344 is glycosylated (N-linked (GlcNAc...) asparagine). The tract at residues 353 to 381 (AANDGGLFSSSGMGPTGASDETSANPLGS) is disordered. A compositionally biased stretch (polar residues) spans 361–378 (SSSGMGPTGASDETSANP). In terms of domain architecture, MACPF spans 463 to 817 (LSAVYTKATK…LTPQDLSALT (355 aa)). Residues Cys-539 and Cys-602 are joined by a disulfide bond. A glycan (N-linked (GlcNAc...) asparagine) is linked at Asn-550. The beta stranded transmembrane segment at 554-589 (YQNELSVDASLQGGDPIGLNSFSASTGYRDFAKEVS) threads the bilayer. The N-linked (GlcNAc...) asparagine glycan is linked to Asn-618. The cysteines at positions 643 and 657 are disulfide-linked. The chain crosses the membrane as a beta stranded span at residues 694–740 (RSEVEKMRNMGIDVKTQLKMQLGGVSGGAGQGTSSKKNQSSSEYQMN). Residues 716–736 (GGVSGGAGQGTSSKKNQSSSE) form a disordered region. A glycan (N-linked (GlcNAc...) asparagine) is linked at Asn-755. Intrachain disulfides connect Cys-845–Cys-900, Cys-874–Cys-881, Cys-928–Cys-981, Cys-957–Cys-964, Cys-1019–Cys-1080, and Cys-1047–Cys-1054. N-linked (GlcNAc...) asparagine glycosylation is found at Asn-1022, Asn-1050, and Asn-1111. Residues 1094–1149 (VGKAKGNGKKKKGKKGKNKTNAPNEVEEGQQLGADSPSQVSVPADADSGPTSKTMS) are disordered. Positions 1099–1111 (GNGKKKKGKKGKN) are enriched in basic residues.

Belongs to the MPEG1 family. As to quaternary structure, homooligomer; forms a homooligomeric pore.

The protein resides in the parasitophorous vacuole membrane. The protein localises to the cytoplasmic vesicle. Its subcellular location is the secretory vesicle. It localises to the microneme membrane. Functionally, pore-forming protein that promotes parasite exit from host cells: mediates formation of a pore in the parasitophorous vacuolar membrane, leading to membrane permeabilization, thereby facilitating parasite egress from host cells. May also form a pore in the host plasma membrane. Preferentially binds inner leaflet lipids, such as phosphatidylethanolamine (PE) or phosphatidylserine (PS). This is Perforin-like protein 1 from Toxoplasma gondii (strain ATCC 50861 / VEG).